Consider the following 218-residue polypeptide: Elongation factor Ts (218 aa).

The tract at residues 82–85 (TDFV) is involved in Mg(2+) ion dislocation from EF-Tu.

This sequence belongs to the EF-Ts family.

It localises to the cytoplasm. Functionally, associates with the EF-Tu.GDP complex and induces the exchange of GDP to GTP. It remains bound to the aminoacyl-tRNA.EF-Tu.GTP complex up to the GTP hydrolysis stage on the ribosome. This is Elongation factor Ts from Picosynechococcus sp. (strain ATCC 27264 / PCC 7002 / PR-6) (Agmenellum quadruplicatum).